Reading from the N-terminus, the 355-residue chain is UDP-N-acetylglucosamine--N-acetylmuramyl-(pentapeptide) pyrophosphoryl-undecaprenol N-acetylglucosamine transferase (355 aa).

UDP-N-acetyl-alpha-D-glucosamine is bound by residues 15 to 17 (TGG), Asn-127, Arg-163, Ser-191, Ile-244, 263 to 268 (ALTVSE), and Gln-288.

It belongs to the glycosyltransferase 28 family. MurG subfamily.

It is found in the cell inner membrane. It catalyses the reaction di-trans,octa-cis-undecaprenyl diphospho-N-acetyl-alpha-D-muramoyl-L-alanyl-D-glutamyl-meso-2,6-diaminopimeloyl-D-alanyl-D-alanine + UDP-N-acetyl-alpha-D-glucosamine = di-trans,octa-cis-undecaprenyl diphospho-[N-acetyl-alpha-D-glucosaminyl-(1-&gt;4)]-N-acetyl-alpha-D-muramoyl-L-alanyl-D-glutamyl-meso-2,6-diaminopimeloyl-D-alanyl-D-alanine + UDP + H(+). It functions in the pathway cell wall biogenesis; peptidoglycan biosynthesis. In terms of biological role, cell wall formation. Catalyzes the transfer of a GlcNAc subunit on undecaprenyl-pyrophosphoryl-MurNAc-pentapeptide (lipid intermediate I) to form undecaprenyl-pyrophosphoryl-MurNAc-(pentapeptide)GlcNAc (lipid intermediate II). The protein is UDP-N-acetylglucosamine--N-acetylmuramyl-(pentapeptide) pyrophosphoryl-undecaprenol N-acetylglucosamine transferase of Photorhabdus laumondii subsp. laumondii (strain DSM 15139 / CIP 105565 / TT01) (Photorhabdus luminescens subsp. laumondii).